The following is a 360-amino-acid chain: Histidinol-phosphate aminotransferase (360 aa).

Lysine 222 bears the N6-(pyridoxal phosphate)lysine mark.

Belongs to the class-II pyridoxal-phosphate-dependent aminotransferase family. Histidinol-phosphate aminotransferase subfamily. As to quaternary structure, homodimer. The cofactor is pyridoxal 5'-phosphate.

The catalysed reaction is L-histidinol phosphate + 2-oxoglutarate = 3-(imidazol-4-yl)-2-oxopropyl phosphate + L-glutamate. It functions in the pathway amino-acid biosynthesis; L-histidine biosynthesis; L-histidine from 5-phospho-alpha-D-ribose 1-diphosphate: step 7/9. This chain is Histidinol-phosphate aminotransferase, found in Listeria innocua serovar 6a (strain ATCC BAA-680 / CLIP 11262).